The primary structure comprises 139 residues: Protein GOS9 (139 aa).

One can recognise a Jacalin-type lectin domain in the interval leucine 5 to isoleucine 139.

Expressed mainly in roots.

This is Protein GOS9 (GOS9) from Oryza sativa subsp. indica (Rice).